Consider the following 627-residue polypeptide: Phosphomethylpyrimidine synthase (627 aa).

Residues 1–24 (MSATQKNNITRLEQLDRQSTQPFP) are compositionally biased toward polar residues. The tract at residues 1 to 29 (MSATQKNNITRLEQLDRQSTQPFPNSRKV) is disordered. Substrate is bound by residues Asn-231, Met-260, Tyr-289, His-325, 345-347 (SRG), 386-389 (DGLR), and Glu-425. His-429 contacts Zn(2+). Tyr-452 serves as a coordination point for substrate. His-493 contacts Zn(2+). [4Fe-4S] cluster is bound by residues Cys-573, Cys-576, and Cys-581.

It belongs to the ThiC family. As to quaternary structure, homodimer. It depends on [4Fe-4S] cluster as a cofactor.

The catalysed reaction is 5-amino-1-(5-phospho-beta-D-ribosyl)imidazole + S-adenosyl-L-methionine = 4-amino-2-methyl-5-(phosphooxymethyl)pyrimidine + CO + 5'-deoxyadenosine + formate + L-methionine + 3 H(+). The protein operates within cofactor biosynthesis; thiamine diphosphate biosynthesis. Functionally, catalyzes the synthesis of the hydroxymethylpyrimidine phosphate (HMP-P) moiety of thiamine from aminoimidazole ribotide (AIR) in a radical S-adenosyl-L-methionine (SAM)-dependent reaction. This chain is Phosphomethylpyrimidine synthase, found in Pseudomonas aeruginosa (strain UCBPP-PA14).